The primary structure comprises 146 residues: Transcriptional regulator MraZ (146 aa).

2 SpoVT-AbrB domains span residues 5–48 (TSYH…TLEE) and 77–120 (ASEC…SRAK).

It belongs to the MraZ family. Forms oligomers.

The protein resides in the cytoplasm. It localises to the nucleoid. The protein is Transcriptional regulator MraZ of Desulfosudis oleivorans (strain DSM 6200 / JCM 39069 / Hxd3) (Desulfococcus oleovorans).